Reading from the N-terminus, the 458-residue chain is Ribulose bisphosphate carboxylase (458 aa).

Residue asparagine 111 participates in substrate binding. Lysine 166 (proton acceptor) is an active-site residue. Lysine 168 lines the substrate pocket. Residues lysine 191, aspartate 193, and glutamate 194 each contribute to the Mg(2+) site. Lysine 191 is subject to N6-carboxylysine. Histidine 287 functions as the Proton acceptor in the catalytic mechanism. Substrate contacts are provided by arginine 288, histidine 321, and serine 368.

This sequence belongs to the RuBisCO large chain family. Type II subfamily. As to quaternary structure, homodimer. Requires Mg(2+) as cofactor.

The catalysed reaction is 2 (2R)-3-phosphoglycerate + 2 H(+) = D-ribulose 1,5-bisphosphate + CO2 + H2O. It carries out the reaction D-ribulose 1,5-bisphosphate + O2 = 2-phosphoglycolate + (2R)-3-phosphoglycerate + 2 H(+). In terms of biological role, ruBisCO catalyzes two reactions: the carboxylation of D-ribulose 1,5-bisphosphate, the primary event in carbon dioxide fixation, as well as the oxidative fragmentation of the pentose substrate. Both reactions occur simultaneously and in competition at the same active site. The sequence is that of Ribulose bisphosphate carboxylase (cbbM) from Rhodobacter capsulatus (strain ATCC BAA-309 / NBRC 16581 / SB1003).